The following is a 317-amino-acid chain: Curved DNA-binding protein (317 aa).

Residues aspartate 5–arginine 69 form the J domain.

It is found in the cytoplasm. The protein resides in the nucleoid. Functionally, DNA-binding protein that preferentially recognizes a curved DNA sequence. It is probably a functional analog of DnaJ; displays overlapping activities with DnaJ, but functions under different conditions, probably acting as a molecular chaperone in an adaptive response to environmental stresses other than heat shock. Lacks autonomous chaperone activity; binds native substrates and targets them for recognition by DnaK. Its activity is inhibited by the binding of CbpM. The sequence is that of Curved DNA-binding protein from Pseudomonas putida (strain W619).